The following is a 382-amino-acid chain: Inactive serine protease 54 (382 aa).

The signal sequence occupies residues 1 to 20 (MAELRGILLLLLYMSHSSSA). The 230-residue stretch at 29–258 (IVDQLHENLV…YSNWIIAKTR (230 aa)) folds into the Peptidase S1 domain. Residue asparagine 113 is glycosylated (N-linked (GlcNAc...) asparagine). 3 disulfide bridges follow: cysteine 154–cysteine 216, cysteine 185–cysteine 195, and cysteine 206–cysteine 237.

Belongs to the peptidase S1 family. Plasma kallikrein subfamily.

It localises to the secreted. The polypeptide is Inactive serine protease 54 (Prss54) (Rattus norvegicus (Rat)).